We begin with the raw amino-acid sequence, 1469 residues long: WASH complex subunit 2 (1469 aa).

S136 is modified (phosphoserine). Disordered regions lie at residues 178-349 (YDSK…RMPV) and 367-546 (KVQS…RVAG). The span at 197-206 (SDEKEPETKK) shows a compositional bias: basic and acidic residues. S227 bears the Phosphoserine mark. Low complexity-rich tracts occupy residues 276 to 293 (SPPS…TSSP) and 306 to 316 (STASLSSSSSS). The LFa 1 motif lies at 351-372 (LFNEDEFKSFMSEIVDKVQSKT). A compositionally biased stretch (polar residues) spans 370-385 (SKTPSSSVSPATTIST). The segment covering 387 to 399 (EPPKTKKPVEEYP) has biased composition (basic and acidic residues). A phosphoserine mark is found at S422 and S426. Acidic residues predominate over residues 519–528 (FDDDDLDIDD). Positions 550 to 563 (LFEDDDQDDVTDLF) match the LFa 5 motif. Residues 571–591 (IPKETSSGVSPNKNVETPVAS) form a disordered region. The span at 574-585 (ETSSGVSPNKNV) shows a compositional bias: polar residues. S580 is subject to Phosphoserine. T587 is subject to Phosphothreonine. An LFa 6 motif is present at residues 595–605 (LFDDIEDEDLF). Disordered stretches follow at residues 607–760 (TPKA…TDLF), 933–1254 (ALPN…KLFS), and 1316–1469 (VTTA…LDFK). Composition is skewed to basic and acidic residues over residues 626-649 (GEDK…EKQH) and 671-687 (TEQK…KDDT). At T693 the chain carries Phosphothreonine. Positions 698–709 (LFSEDLTDDELF) match the LFa 8 motif. Polar residues-rich tracts occupy residues 709–728 (FSST…TNEF), 735–745 (YTSQTEENVSP), and 938–956 (PSAT…SVSS). Composition is skewed to basic and acidic residues over residues 971-990 (DNDH…KDEL), 1031-1042 (ETDRSEVKETPE), and 1077-1089 (RKQE…RDEP). Residues 1091–1109 (ATVQTEAEAPSSGQNTVSS) show a composition bias toward polar residues. Basic residues predominate over residues 1118 to 1136 (NKSRARGPAKRRPSTRRGR). The segment covering 1159–1170 (DSPEVEHSERSS) has biased composition (basic and acidic residues). Phosphoserine is present on residues S1241, S1245, S1254, S1344, S1380, S1381, and S1408. Low complexity-rich tracts occupy residues 1417–1426 (FGGSSTSKAA) and 1434–1452 (AART…PTAT).

Belongs to the FAM21 family. Component of the WASH complex.

Acts at least in part as component of the WASH complex which may regulate wash nucleation-promoting factor (NPF) activity and is required for its membrane targeting during endosomal sorting. The polypeptide is WASH complex subunit 2 (Drosophila melanogaster (Fruit fly)).